The following is a 152-amino-acid chain: Large ribosomal subunit protein uL22 (152 aa).

Over residues 124 to 143 the composition is skewed to low complexity; that stretch reads APTKAASKKAAPAKQTTPAA. Positions 124–152 are disordered; the sequence is APTKAASKKAAPAKQTTPAATESKTEGAE.

This sequence belongs to the universal ribosomal protein uL22 family. Part of the 50S ribosomal subunit.

Functionally, this protein binds specifically to 23S rRNA; its binding is stimulated by other ribosomal proteins, e.g. L4, L17, and L20. It is important during the early stages of 50S assembly. It makes multiple contacts with different domains of the 23S rRNA in the assembled 50S subunit and ribosome. The globular domain of the protein is located near the polypeptide exit tunnel on the outside of the subunit, while an extended beta-hairpin is found that lines the wall of the exit tunnel in the center of the 70S ribosome. In Salinispora arenicola (strain CNS-205), this protein is Large ribosomal subunit protein uL22.